Consider the following 263-residue polypeptide: Transmembrane protein 176B (263 aa).

A run of 4 helical transmembrane segments spans residues 61 to 81 (LGVTQILLGLVSCALGVCLYF), 89 to 109 (AFGCAFWSGSVAILAGVGTIV), 121 to 141 (VSCLLLLACIATAAAATVLGV), and 197 to 217 (LFLAFCIMLTVVCILEIVVSV). Phosphoserine is present on residues Ser231, Ser240, and Ser253. Residues 239-263 (ESERKLLDGHPAPASPAKEKIPAIL) form a disordered region.

It belongs to the TMEM176 family. As to expression, ubiquitously expressed with higher expression in lung, liver, kidney and colon. Expressed in cerebellar granule cells.

The protein localises to the nucleus membrane. Functionally, may play a role in the process of maturation of dendritic cells. Required for the development of cerebellar granule cells. This is Transmembrane protein 176B (Tmem176b) from Mus musculus (Mouse).